Consider the following 68-residue polypeptide: Protein SlyX homolog (68 aa).

This sequence belongs to the SlyX family.

This Pseudomonas putida (strain GB-1) protein is Protein SlyX homolog.